The following is an 869-amino-acid chain: MYVIKRDGRKEPVQFDKITSRITRLSYGLDPNRIDAVKVTQRIISGVYSGVTTVELDNLAAETCAYMTTVHPDYATLAARIAISNLHKQTTKQFSKVIEDLHDWINPATGKHAPMISDEIYNIVMENKDTLNSAIVYDRDFQYTYFGFKTLERSYLLRLNGEVAERPQHLVMRVALGIHGSDIESVLKTYNLMSLRYFTHASPTLFNAGTPHPQMSSCFLIAMKDDSIEGIYDTLKECAMISKTAGGVGLHINNIRSTGSYIAGTNGTSNGLIPMIRVFNNTARYVDQGGNKRPGAFALFLEPWHADIFDFVDIRKTHGKEEIRARDLFPALWIPDLFMKRVQEDGPWTLFSPSAAPGLDDVWGDEFEELYTRYEREGRGKTIKAQKLWYAILQAQTETGTPFMVYKDACNRKTNQQNLGTIKSSNLCCEIVEYSSPDETAVCNLASIALPAFVEVSEDGKTASYNFERLHEIAKVITHNLNRVIDRNYYPVPEARNSNMKHRPIALGVQGLADTYMMLRLPFESEEAQTLNKQIFETIYHATLEASCELAQKEGKYSTFEGSPASKGILQFDMWNAKPFGMWDWETLRKDIVKHGLRNSLTMAPMPTASTSQILGYNECFEPVTSNMYSRRVLSGEFQVVNPYLLRDLVDLGIWDDSMKQYLITQNGSIQGLPNVPQELKELYKTVWEISQKTIINMAADRAIYIDQSHSLNLFLQAPSMGKITSMHFYGWKKGLKTGMYYLRTQAASAAIQFTIDQEVADQAATHIASVSELDRPVYVPKGTKFSEQKAASALTESSDNEKDASPVPSEQSSVSSAMSNVKLEDSVAPAVPTETIKEDSDEKKCDIYNEKVIACTAPTPEACESCSG.

The 92-residue stretch at 1–92 (MYVIKRDGRK…ISNLHKQTTK (92 aa)) folds into the ATP-cone domain. ATP contacts are provided by residues 5 to 6 (KR), 11 to 17 (EPVQFDK), Thr-53, and Asp-57. GDP is bound by residues Ser-202 and Ser-217. Residues Cys-218 and Cys-443 are joined by a disulfide bond. DTTP contacts are provided by residues 226 to 228 (DSI), Lys-243, Arg-256, and 263 to 264 (AG). The residue at position 227 (Ser-227) is a Phosphoserine. Lys-387 is covalently cross-linked (Glycyl lysine isopeptide (Lys-Gly) (interchain with G-Cter in ubiquitin)). Position 426 (Asn-426) interacts with GDP. Catalysis depends on Asn-426, which acts as the Proton acceptor. Catalysis depends on Cys-428, which acts as the Cysteine radical intermediate. GDP contacts are provided by residues Glu-430 and 608–611 (TAST). The active-site Proton acceptor is Glu-430. A disordered region spans residues 793–843 (SALTESSDNEKDASPVPSEQSSVSSAMSNVKLEDSVAPAVPTETIKEDSDE). Ser-806, Ser-827, and Ser-868 each carry phosphoserine. A compositionally biased stretch (low complexity) spans 806 to 820 (SPVPSEQSSVSSAMS).

The protein belongs to the ribonucleoside diphosphate reductase large chain family. As to quaternary structure, heterotetramer of two large (R1) and two small (R2) subunits. S.cerevisiae has two different R1 subunits (RNR1 and RNR3) and two different R2 subunits (RNR2 and RNR4). The functional form of the small subunits is a RNR2-RNR4 heterodimer, where RNR2 provides the iron-radical center and RNR4 is required for proper folding of RNR2 and assembly with the large subunits. Under normal growth conditions, the active form of the large subunits is a homodimer of the constitutively expressed RNR1. In damaged cells or cells arrested for DNA synthesis, the reductase consists of multiple species because of the association of the small subunits (RNR2-RNR4) with either the RNR1 homodimer or a heterodimer of RNR1 and the damage-inducible RNR3.

The protein localises to the cytoplasm. The catalysed reaction is a 2'-deoxyribonucleoside 5'-diphosphate + [thioredoxin]-disulfide + H2O = a ribonucleoside 5'-diphosphate + [thioredoxin]-dithiol. With respect to regulation, under complex allosteric control mediated by deoxynucleoside triphosphates and ATP binding to separate specificity and activation sites on the large subunit. The type of nucleotide bound at the specificity site determines substrate preference. It seems probable that ATP makes the enzyme reduce CDP and UDP, dGTP favors ADP reduction and dTTP favors GDP reduction. Stimulated by ATP and inhibited by dATP binding to the activity site. Functionally, provides the precursors necessary for DNA synthesis. Catalyzes the biosynthesis of deoxyribonucleotides from the corresponding ribonucleotides. In Saccharomyces cerevisiae (strain ATCC 204508 / S288c) (Baker's yeast), this protein is Ribonucleoside-diphosphate reductase large chain 2 (RNR3).